A 330-amino-acid chain; its full sequence is Phenylalanine--tRNA ligase alpha subunit (330 aa).

Glu-254 is a Mg(2+) binding site.

The protein belongs to the class-II aminoacyl-tRNA synthetase family. Phe-tRNA synthetase alpha subunit type 1 subfamily. In terms of assembly, tetramer of two alpha and two beta subunits. Requires Mg(2+) as cofactor.

The protein resides in the cytoplasm. The enzyme catalyses tRNA(Phe) + L-phenylalanine + ATP = L-phenylalanyl-tRNA(Phe) + AMP + diphosphate + H(+). The chain is Phenylalanine--tRNA ligase alpha subunit (pheS) from Neisseria meningitidis serogroup B (strain ATCC BAA-335 / MC58).